The chain runs to 263 residues: Diphthine synthase (263 aa).

S-adenosyl-L-methionine is bound by residues Leu11, Asp89, Ala92, 117 to 118 (SV), Leu166, and Leu208.

It belongs to the diphthine synthase family. In terms of assembly, homodimer.

The catalysed reaction is 2-[(3S)-amino-3-carboxypropyl]-L-histidyl-[translation elongation factor 2] + 3 S-adenosyl-L-methionine = diphthine-[translation elongation factor 2] + 3 S-adenosyl-L-homocysteine + 3 H(+). It participates in protein modification; peptidyl-diphthamide biosynthesis. Functionally, S-adenosyl-L-methionine-dependent methyltransferase that catalyzes the trimethylation of the amino group of the modified target histidine residue in translation elongation factor 2 (EF-2), to form an intermediate called diphthine. The three successive methylation reactions represent the second step of diphthamide biosynthesis. The protein is Diphthine synthase of Methanopyrus kandleri (strain AV19 / DSM 6324 / JCM 9639 / NBRC 100938).